Consider the following 729-residue polypeptide: Fatty acid oxidation complex subunit alpha (729 aa).

The interval 1 to 189 (MLYKGDTLYL…KIGLVDGVVA (189 aa)) is enoyl-CoA hydratase/isomerase. Substrate is bound at residue Asp-296. Positions 311 to 729 (ETPKHAAVLG…ARPVGALKTA (419 aa)) are 3-hydroxyacyl-CoA dehydrogenase. NAD(+) is bound by residues Met-324, Asp-343, 400–402 (VVE), Lys-407, and Ser-429. His-450 functions as the For 3-hydroxyacyl-CoA dehydrogenase activity in the catalytic mechanism. Asn-453 is an NAD(+) binding site. Substrate is bound by residues Asn-500 and Tyr-660.

The protein in the N-terminal section; belongs to the enoyl-CoA hydratase/isomerase family. In the C-terminal section; belongs to the 3-hydroxyacyl-CoA dehydrogenase family. In terms of assembly, heterotetramer of two alpha chains (FadB) and two beta chains (FadA).

The enzyme catalyses a (3S)-3-hydroxyacyl-CoA + NAD(+) = a 3-oxoacyl-CoA + NADH + H(+). The catalysed reaction is a (3S)-3-hydroxyacyl-CoA = a (2E)-enoyl-CoA + H2O. It carries out the reaction a 4-saturated-(3S)-3-hydroxyacyl-CoA = a (3E)-enoyl-CoA + H2O. It catalyses the reaction (3S)-3-hydroxybutanoyl-CoA = (3R)-3-hydroxybutanoyl-CoA. The enzyme catalyses a (3Z)-enoyl-CoA = a 4-saturated (2E)-enoyl-CoA. The catalysed reaction is a (3E)-enoyl-CoA = a 4-saturated (2E)-enoyl-CoA. Its pathway is lipid metabolism; fatty acid beta-oxidation. Functionally, involved in the aerobic and anaerobic degradation of long-chain fatty acids via beta-oxidation cycle. Catalyzes the formation of 3-oxoacyl-CoA from enoyl-CoA via L-3-hydroxyacyl-CoA. It can also use D-3-hydroxyacyl-CoA and cis-3-enoyl-CoA as substrate. This Klebsiella pneumoniae (strain 342) protein is Fatty acid oxidation complex subunit alpha.